The primary structure comprises 188 residues: Protein SSX1 (188 aa).

Disordered stretches follow at residues 1–22 (MNGD…EKRS) and 111–188 (IMPK…EDDE). Positions 20–83 (KRSKAFDDIA…KQATDFQGND (64 aa)) constitute a KRAB-related domain. Residues 115–125 (KPAEDENDSKG) show a composition bias toward basic and acidic residues. Ser-123 carries the post-translational modification Phosphoserine. Positions 153-170 (KRSGPKRGKHAWTHRLRE) are enriched in basic residues. Over residues 179-188 (EISDPEEDDE) the composition is skewed to acidic residues.

It belongs to the SSX family. As to expression, expressed at high level in the testis. Expressed at low level in thyroid. Not detected in tonsil, colon, lung, spleen, prostate, kidney, striated and smooth muscles. Detected in rhabdomyosarcoma and fibrosarcoma cell lines. Not detected in mesenchymal and epithelial cell lines. Expressed in testis.

It is found in the cytoplasm. Its subcellular location is the cytoskeleton. It localises to the flagellum axoneme. In terms of biological role, could act as a modulator of transcription. Plays a role in spermatogenesis. In Homo sapiens (Human), this protein is Protein SSX1 (SSX1).